A 755-amino-acid chain; its full sequence is Histone-lysine N-methyltransferase, H3 lysine-9 specific SUVH8 (755 aa).

Disordered regions lie at residues 62–98 and 111–243; these read YDRDAGPSTGPVHRERSDAVNEEAHATSIPPHAPPQT and YDRD…KMVI. Basic and acidic residues-rich tracts occupy residues 73-86 and 122-135; these read VHRERSDAVNEEAH and IDREASHEVNEDAH. The a.T hook DNA-binding region spans 174 to 186; the sequence is KRGRGRPKGSKNG. A compositionally biased stretch (basic residues) spans 174–193; it reads KRGRGRPKGSKNGSRKPKKP. A compositionally biased stretch (polar residues) spans 197-207; sequence DNNSTDASAGP. The span at 212–231 shows a compositional bias: basic residues; the sequence is GKRRCGRPKGLKNRSRKPKK. Residues 310–448 enclose the YDG domain; sequence GPIPGVQVGD…FKEYRFKLLR (139 aa). The 51-residue stretch at 528–578 folds into the Pre-SET domain; it reads QSLVQSYIHQNCTCILKNCGQLPYHDNILVCRKPLIYECGGSCPTRMVETG. An SET domain is found at 581-723; sequence LHLEVFKTSN…PMTELTYDYG (143 aa). S-adenosyl-L-methionine contacts are provided by residues 591–593, aspartate 624, tyrosine 626, arginine 676, and 679–680; these read CGW and NH. Residues cysteine 682, cysteine 743, cysteine 745, and cysteine 750 each coordinate Zn(2+). The Post-SET domain maps to 739-755; the sequence is GKKICLCGSVKCRGSFG.

Belongs to the class V-like SAM-binding methyltransferase superfamily. Histone-lysine methyltransferase family. Suvar3-9 subfamily.

It localises to the nucleus. The protein resides in the chromosome. Its subcellular location is the centromere. The catalysed reaction is N(6)-methyl-L-lysyl(9)-[histone H3] + S-adenosyl-L-methionine = N(6),N(6)-dimethyl-L-lysyl(9)-[histone H3] + S-adenosyl-L-homocysteine + H(+). It carries out the reaction L-lysyl(9)-[histone H3] + S-adenosyl-L-methionine = N(6)-methyl-L-lysyl(9)-[histone H3] + S-adenosyl-L-homocysteine + H(+). Histone methyltransferase. Methylates 'Lys-9' of histone H3. H3 'Lys-9' methylation represents a specific tag for epigenetic transcriptional repression. This chain is Histone-lysine N-methyltransferase, H3 lysine-9 specific SUVH8 (SUVH8), found in Arabidopsis thaliana (Mouse-ear cress).